Reading from the N-terminus, the 405-residue chain is Macrolide efflux protein A (405 aa).

Transmembrane regions (helical) follow at residues 14 to 34 (IWAGQAVSLITSAILQMAIIF), 48 to 68 (MASLLGFLPYAVFGPAIGVLV), 76 to 98 (IMIGADLIIAAAGSVLTIVAFYM), 145 to 165 (SLQSISYIVSPAVAALLYSVW), 168 to 188 (NAIIAIDVLGAVIASITVAIV), 222 to 242 (FALLLVGTLYMFVYMPINALF), 259 to 279 (ITEISFASGMLIGGLLLGLFG), 285 to 305 (ILLITASIFMMGISLTISGLL), 310 to 330 (FFIFVVCCAIMGLSVPFYSGV), 350 to 370 (LTGSIMSLAMPIGLILSALFA), and 373 to 393 (IGVNHWFLLSGTLIICIAIVC).

Belongs to the major facilitator superfamily. Drug:H(+) antiporter-3 (DHA3) (TC 2.A.1.21) family.

Its subcellular location is the cell membrane. Functionally, confers resistance to 14-membered macrolides including erythromycin and to 15-membered macrolides but not to 16-membered macrolides, lincosamides or analogs of streptogramin B. May function as an efflux pump to regulate intracellular macrolide levels. This is Macrolide efflux protein A from Streptococcus pyogenes serotype M6 (strain ATCC BAA-946 / MGAS10394).